A 242-amino-acid polypeptide reads, in one-letter code: ATP-dependent dethiobiotin synthetase BioD (242 aa).

Position 15–20 (15–20 (DVGKTV)) interacts with ATP. Position 19 (Thr19) interacts with Mg(2+). The active site involves Lys40. A substrate-binding site is contributed by Ser44. Glu117 contributes to the Mg(2+) binding site. Residues 117 to 120 (EGAG), 178 to 179 (NQ), and 208 to 210 (PYS) contribute to the ATP site.

Belongs to the dethiobiotin synthetase family. Homodimer. The cofactor is Mg(2+).

The protein localises to the cytoplasm. The enzyme catalyses (7R,8S)-7,8-diammoniononanoate + CO2 + ATP = (4R,5S)-dethiobiotin + ADP + phosphate + 3 H(+). It functions in the pathway cofactor biosynthesis; biotin biosynthesis; biotin from 7,8-diaminononanoate: step 1/2. Functionally, catalyzes a mechanistically unusual reaction, the ATP-dependent insertion of CO2 between the N7 and N8 nitrogen atoms of 7,8-diaminopelargonic acid (DAPA, also called 7,8-diammoniononanoate) to form a ureido ring. This chain is ATP-dependent dethiobiotin synthetase BioD, found in Halalkalibacterium halodurans (strain ATCC BAA-125 / DSM 18197 / FERM 7344 / JCM 9153 / C-125) (Bacillus halodurans).